A 498-amino-acid polypeptide reads, in one-letter code: Membrane-bound lytic murein transglycosylase F (498 aa).

Residues 1–29 (MFFKPDFRPRCAKWLIATGLFLMLGACVE) form the signal peptide. Residues 30-267 (KPTTLERVKE…RLKDRYYGHV (238 aa)) are non-LT domain. Residues 268 to 498 (DVLGYVGAYT…SSSSTDESPL (231 aa)) form an LT domain region. The active site involves E314. The disordered stretch occupies residues 464-498 (VADGNLHVPGVDKTQPPVPPASPVPSSSSTDESPL).

In the N-terminal section; belongs to the bacterial solute-binding protein 3 family. It in the C-terminal section; belongs to the transglycosylase Slt family.

Its subcellular location is the cell outer membrane. The enzyme catalyses Exolytic cleavage of the (1-&gt;4)-beta-glycosidic linkage between N-acetylmuramic acid (MurNAc) and N-acetylglucosamine (GlcNAc) residues in peptidoglycan, from either the reducing or the non-reducing ends of the peptidoglycan chains, with concomitant formation of a 1,6-anhydrobond in the MurNAc residue.. Functionally, murein-degrading enzyme that degrades murein glycan strands and insoluble, high-molecular weight murein sacculi, with the concomitant formation of a 1,6-anhydromuramoyl product. Lytic transglycosylases (LTs) play an integral role in the metabolism of the peptidoglycan (PG) sacculus. Their lytic action creates space within the PG sacculus to allow for its expansion as well as for the insertion of various structures such as secretion systems and flagella. The sequence is that of Membrane-bound lytic murein transglycosylase F from Pseudomonas syringae pv. syringae (strain B728a).